Here is a 45-residue protein sequence, read N- to C-terminus: Large ribosomal subunit protein bL34 (45 aa).

Composition is skewed to basic residues over residues 1–15 (MKAK…RKRA) and 22–45 (MKTK…IAIK). Positions 1–45 (MKAKSHLSNKKRKRASGFLARMKTKAGRKILARRRAKGRKRIAIK) are disordered.

It belongs to the bacterial ribosomal protein bL34 family.

The polypeptide is Large ribosomal subunit protein bL34 (Sulfurihydrogenibium sp. (strain YO3AOP1)).